A 416-amino-acid polypeptide reads, in one-letter code: MNVYTVSQLNEQIKNLLESHFVEVYVEGEVSRPTYHTSGHLYFSLKDEKSVIRCVMFRSALAKVPFRVEDGQKLIVAGKIGVYKPRGEYQLYATELHPSGVGSLQLAFEQLKAKLEKKGYFASELKKPLPDFIQTIALVTSQTGAALQDMLRIIQNRWPLVKVYVVDTLVQGSDAAPMIARSIAYADGLGVDVIVVGRGGGSLEDLWPFNEEIVADAIFEAKTPIVSAVGHEIDFLISDFVADLRAPTPSAAMEMILPDRQEMLMHLDLLMQRLTKRMQTILQLKTQELGHLQNSLFQLSPQKRLEFYEKEITIMNERMNETITAILKNSSHEIPHLKALFDQKIEWIWKQKKQDLTSLQQKLTMTMEAKKIPKNSAQMVKNGKPVSLEDIDVGDEVELQDVHYKALAKILSKDAL.

The protein belongs to the XseA family. In terms of assembly, heterooligomer composed of large and small subunits.

The protein localises to the cytoplasm. The catalysed reaction is Exonucleolytic cleavage in either 5'- to 3'- or 3'- to 5'-direction to yield nucleoside 5'-phosphates.. In terms of biological role, bidirectionally degrades single-stranded DNA into large acid-insoluble oligonucleotides, which are then degraded further into small acid-soluble oligonucleotides. The protein is Exodeoxyribonuclease 7 large subunit of Nitratiruptor sp. (strain SB155-2).